The sequence spans 198 residues: NAD(P)H dehydrogenase (quinone) (198 aa).

A Flavodoxin-like domain is found at 4 to 189; that stretch reads VLVLYYSMYG…SIARYQGEYV (186 aa). Residues 10 to 15 and 78 to 80 each bind FMN; these read SMYGHI and TRF. An NAD(+)-binding site is contributed by Y12. Residue W98 coordinates substrate. FMN contacts are provided by residues 113-118 and H133; that span reads STGTGG.

It belongs to the WrbA family. The cofactor is FMN.

The enzyme catalyses a quinone + NADH + H(+) = a quinol + NAD(+). It catalyses the reaction a quinone + NADPH + H(+) = a quinol + NADP(+). The protein is NAD(P)H dehydrogenase (quinone) of Escherichia coli (strain SE11).